Here is a 396-residue protein sequence, read N- to C-terminus: Histidine-rich glycoprotein (396 aa).

Cystatin domains follow at residues 1-102 and 103-169; these read AVNP…SALT and NMRA…RFSA. 6 disulfides stabilise this stretch: cysteine 7/cysteine 375, cysteine 56/cysteine 67, cysteine 77/cysteine 92, cysteine 123/cysteine 297, cysteine 137/cysteine 160, and cysteine 212/cysteine 242. Asparagine 70 carries an N-linked (GlcNAc...) asparagine; partial glycan. Residues asparagine 91 and asparagine 122 are each glycosylated (N-linked (GlcNAc...) asparagine). The segment at 176-322 is disordered; it reads RPFHSGEHEH…GPGKGHFRFH (147 aa). Basic and acidic residues predominate over residues 197-208; that stretch reads GSKDHGHPHESY. Asparagine 220 is a glycosylation site (N-linked (GlcNAc...) asparagine). Pro residues predominate over residues 233-246; the sequence is LPFPPPGLRCPHPP. Residues 255–265 are compositionally biased toward basic and acidic residues; sequence PPHDHSSDEHH. Positions 266-284 are enriched in basic residues; the sequence is PHGHHPHGHHPHGHHPHGH. Basic and acidic residues predominate over residues 285–296; it reads HPPDNDFYDHGP. The segment covering 304 to 322 has biased composition (basic residues); the sequence is PPPRHSKERGPGKGHFRFH. Residue serine 309 is modified to Phosphoserine.

In terms of assembly, interacts (via the HRR domain) with TPM1; the interaction appears to contribute to the antiangiogenic properties of the HRR domain. Interacts with THBS1 (via the TSP type I repeats); the interaction blocks the antiangiogenic effect of THBS1 with CD36. Interacts with PLG (via its Kringle domains); the interaction tethers PLG to the cell surface and enhances its activation. Interacts with THBS2; the interaction blocks the antiangiogenic effect of THBS2 with CD36. Interacts with HPSE; the interaction is enhanced at acidic pH, partially inhibits binding of HPSE to cell surface receptors and modulates its enzymatic activity. Interacts (via the HRR domain) with TMP1; the interaction partially mediates the antiangiogenic properties of HRG. Interacts with kappa and lambda light chains of IgG molecules. Interacts with ATP5F1A; the interaction occurs on the surface of T-cells and alters their cell morphology in concert with CONA. Binds IgG molecules containing kappa and lambda light chains and inhibits the formation of insoluble immunoglobulin complexes. Interacts with F12; the interaction, which is enhanced in the presence of zinc ions and inhibited by heparin-binding to HRG, inhibits factor XII autoactivation and contact-initiated coagulation. N-glycosylated. Post-translationally, proteolytic cleavage produces several HRG fragments which are mostly disulfide-linked and, therefore, not released. On platelet activation, may release a 33 kDa antiangiogenic peptide which encompasses the HRR.

It localises to the secreted. Functionally, plasma glycoprotein that binds a number of ligands such as heme, heparin, heparan sulfate, thrombospondin, plasminogen, and divalent metal ions. Inhibits rosette formation. Acts as an adapter protein and implicated in regulating many processes such as immune complex and pathogen clearance, cell adhesion, angiogenesis, coagulation and fibrinolysis. Mediates clearance of necrotic cells through enhancing the phagocytosis of necrotic cells in a heparan sulfate-dependent pathway. This process can be regulated by the presence of certain HRG ligands such as heparin and zinc ions. Binds to IgG subclasses of immunoglobins containing kappa and lambda light chains with different affinities regulating their clearance and inhibiting the formation of insoluble immune complexes. Tethers plasminogen to the cell surface. Binds T-cells and alters the cell morphology. Modulates angiogenesis by blocking the CD6-mediated antiangiongenic effect of thrombospondins, THBS1 and THBS2. The chain is Histidine-rich glycoprotein (HRG) from Bos taurus (Bovine).